The chain runs to 530 residues: Plexin domain-containing protein 2 (530 aa).

The first 30 residues, 1-30, serve as a signal peptide directing secretion; sequence MARFRRADLAAAGVMLLCHFLTDRFQFAHG. Over 31-455 the chain is Extracellular; that stretch reads EPGHHTNDWI…AEKKGGTLHA (425 aa). N-linked (GlcNAc...) asparagine glycosylation is found at asparagine 103 and asparagine 160. In terms of domain architecture, PSI spans 327–372; the sequence is TCLQFNGCGPCVSSQIGFNCSWCSKLQRCSSGFDRHRQDWVDSGCP. The segment covering 378–387 has biased composition (basic and acidic residues); the sequence is KEKMCEKTEP. The disordered stretch occupies residues 378-399; it reads KEKMCEKTEPGETSQTTTTSHT. The segment covering 390 to 399 has biased composition (low complexity); it reads TSQTTTTSHT. The chain crosses the membrane as a helical span at residues 456-476; that stretch reads GLIVGILILVLIIAAAILVTV. Residues 477 to 530 are Cytoplasmic-facing; sequence YMYHHPTSAASIFFIERRPSRWPAMKFRRGSGHPAYAEVEPVGEKEGFIVSEQC. Serine 507 is modified (phosphoserine).

Belongs to the plexin family. In terms of assembly, interacts with CTTN. In terms of tissue distribution, expressed in tumor endothelium and in vessels of some normal tissues, such as the muscle and lung.

Its subcellular location is the membrane. May play a role in tumor angiogenesis. The protein is Plexin domain-containing protein 2 (Plxdc2) of Mus musculus (Mouse).